Here is a 157-residue protein sequence, read N- to C-terminus: Transcription antitermination protein NusB (157 aa).

The protein belongs to the NusB family.

Involved in transcription antitermination. Required for transcription of ribosomal RNA (rRNA) genes. Binds specifically to the boxA antiterminator sequence of the ribosomal RNA (rrn) operons. The polypeptide is Transcription antitermination protein NusB (Xylella fastidiosa (strain 9a5c)).